Reading from the N-terminus, the 112-residue chain is MQAKAIAKYVRISPLKVNFICKEIRGKQVDEALAILKFTPKKGARILEKVLNSAIANAEHNFGLNREDLFVSQAYANNAPVMKRWRPKAKGMAYPILKRSSHVGVVVEEREL.

The protein belongs to the universal ribosomal protein uL22 family. Part of the 50S ribosomal subunit.

Its function is as follows. This protein binds specifically to 23S rRNA; its binding is stimulated by other ribosomal proteins, e.g. L4, L17, and L20. It is important during the early stages of 50S assembly. It makes multiple contacts with different domains of the 23S rRNA in the assembled 50S subunit and ribosome. The globular domain of the protein is located near the polypeptide exit tunnel on the outside of the subunit, while an extended beta-hairpin is found that lines the wall of the exit tunnel in the center of the 70S ribosome. The sequence is that of Large ribosomal subunit protein uL22 from Finegoldia magna (strain ATCC 29328 / DSM 20472 / WAL 2508) (Peptostreptococcus magnus).